Reading from the N-terminus, the 1790-residue chain is E3 ubiquitin-protein ligase RBBP6 (1790 aa).

One can recognise a DWNN domain in the interval 4 to 76 (VHYKFSSKLN…NSSVIVRRIP (73 aa)). Lysine 130 carries the post-translational modification N6-acetyllysine. The CCHC-type zinc finger occupies 160–177 (YTCFRCGKPGHYIKNCPT). 4 positions are modified to phosphoserine: serine 245, serine 246, serine 247, and serine 248. The RING-type; degenerate zinc finger occupies 260 to 301 (CLICKDIMTDAVVIPCCGNSYCDECIRTALLESDEHTCPTCH). The disordered stretch occupies residues 329 to 353 (YTKRLRKQLPPPPPPVPPPRPLMQR). Residues 337–349 (LPPPPPPVPPPRP) show a composition bias toward pro residues. Position 361 is a phosphoserine (serine 361). Residues 374 to 408 (VTSSSAHSAPSISSLTSNPSALAPSVSGNPSSAPA) form a disordered region. Residues 376-390 (SSSAHSAPSISSLTS) show a composition bias toward low complexity. Residue serine 517 is modified to Phosphoserine. 4 disordered regions span residues 533–599 (INRG…AGYS), 622–641 (QTAH…SREE), 648–667 (RLKE…NDFA), and 675–797 (KIQK…REYF). Residues 558 to 599 (VPVPPPPLYPPPPHTLPLPPGVPPPQFSPQFPPGQPPPAGYS) are compositionally biased toward pro residues. Residues 622–635 (QTAHSNTIPTTQAP) show a composition bias toward polar residues. Low complexity predominate over residues 686 to 720 (RSKSPYSGSSYSRSSYTYSKSRSGSTRSRSYSRSF). Basic residues predominate over residues 736–771 (RRGRGKSRNYRSRSRSHGYHRSRSRSPPYRRYHSRS). Phosphoserine is present on residues serine 769, serine 771, serine 773, serine 781, serine 816, serine 862, and serine 874. Disordered regions lie at residues 850–1292 (AQPR…TKRT) and 1322–1790 (WDKD…SVTV). Residues 903–923 (LSTRDSHNAKDNPKSKEKESE) are compositionally biased toward basic and acidic residues. The span at 932-941 (NKHKKHRKRR) shows a compositional bias: basic residues. 5 stretches are compositionally biased toward basic and acidic residues: residues 956 to 972 (ETSR…ETKT), 980 to 991 (SRDDATPVRDEP), 1002 to 1018 (VSDK…VKSD), 1042 to 1072 (PQEK…KIDS), and 1096 to 1161 (SAKE…KDFE). Serine 958 is modified (phosphoserine). An interaction with RB1 region spans residues 983–1139 (DATPVRDEPM…KAKKPEKNKL (157 aa)). Phosphothreonine is present on threonine 985. Glycyl lysine isopeptide (Lys-Gly) (interchain with G-Cter in SUMO2) cross-links involve residues lysine 1107 and lysine 1169. The residue at position 1179 (serine 1179) is a Phosphoserine. 2 stretches are compositionally biased toward basic and acidic residues: residues 1182 to 1200 (RKME…KDKI) and 1231 to 1249 (EPSE…EKVK). Residues 1260–1277 (EGSSSTLVDYTSTSSTGG) show a composition bias toward polar residues. Threonine 1272 bears the Phosphothreonine mark. The residue at position 1278 (serine 1278) is a Phosphoserine. Basic and acidic residues predominate over residues 1281-1291 (RKSEEKTDTKR). Residues serine 1329, serine 1342, and serine 1348 each carry the phosphoserine modification. Residues 1336–1358 (TTQPIQSVGKPSSIIKNVTTKPS) are compositionally biased toward polar residues. Basic and acidic residues-rich tracts occupy residues 1363-1392 (YTEK…ELRS), 1400-1440 (EKGR…EQGH), 1449-1460 (KETRTSEKHESV), 1469-1507 (TPGR…RGKE), and 1515-1580 (KLRE…RNGK). The tract at residues 1434–1544 (RLSEQGHFKT…SPPRDKKPHD (111 aa)) is interaction with p53. The residue at position 1469 (threonine 1469) is a Phosphothreonine. A compositionally biased stretch (polar residues) spans 1618–1627 (LSHSSRLSSD). Residues 1634–1646 (EAAFEPDYNESDS) are compositionally biased toward acidic residues. Phosphoserine is present on residues serine 1646, serine 1648, and serine 1651. Positions 1663-1675 (KDLKEKTTEKAKE) are enriched in basic and acidic residues. The segment covering 1689-1724 (RSQSQSSPSVSPSRSHSPSGSQTRSHSSSASSAGSQ) has biased composition (low complexity). Over residues 1727–1750 (KKKKKKKEKKKHKKHKKHKKHKKH) the composition is skewed to basic residues. A compositionally biased stretch (basic and acidic residues) spans 1751–1760 (AGADGDVEKS). Basic residues predominate over residues 1761–1773 (QKHKHKKKKAKKN). Over residues 1774–1790 (KDKEKEKDDQKVRSVTV) the composition is skewed to basic and acidic residues.

As to quaternary structure, interacts with MDM2 and YBX1. Also interacts with p53/TP53 and RB1. Interacts with NEK6. Interacts with ZBTB38. Post-translationally, phosphorylated by NEK6. Highly expressed in testis. Expressed at lower levels in brain, heart, kidney, liver, lung, skeletal muscle, spleen, thymus and tongue.

Its subcellular location is the nucleus. The protein localises to the nucleolus. It is found in the chromosome. The protein resides in the cytoplasm. It localises to the cytoskeleton. Its subcellular location is the microtubule organizing center. The protein localises to the centrosome. It carries out the reaction S-ubiquitinyl-[E2 ubiquitin-conjugating enzyme]-L-cysteine + [acceptor protein]-L-lysine = [E2 ubiquitin-conjugating enzyme]-L-cysteine + N(6)-ubiquitinyl-[acceptor protein]-L-lysine.. The protein operates within protein modification; protein ubiquitination. Its function is as follows. E3 ubiquitin-protein ligase which promotes ubiquitination of YBX1, leading to its degradation by the proteasome. May play a role as a scaffold protein to promote the assembly of the p53/TP53-MDM2 complex, resulting in increase of MDM2-mediated ubiquitination and degradation of p53/TP53; may function as negative regulator of p53/TP53, leading to both apoptosis and cell growth retardation. Regulates DNA-replication and common fragile sites (CFS) stability in a ZBTB38- and MCM10-dependent manner. Controls ZBTB38 protein stability and abundance via ubiquitination and proteasomal degradation, and ZBTB38 in turn negatively regulates the expression of MCM10 which plays an important role in DNA-replication. The chain is E3 ubiquitin-protein ligase RBBP6 (Rbbp6) from Mus musculus (Mouse).